The following is a 247-amino-acid chain: Eukaryotic translation initiation factor 6-1 (247 aa).

Belongs to the eIF-6 family. As to quaternary structure, monomer. Associates with the 60S ribosomal subunit.

Its subcellular location is the cytoplasm. It localises to the nucleus. The protein resides in the nucleolus. In terms of biological role, binds to the 60S ribosomal subunit and prevents its association with the 40S ribosomal subunit to form the 80S initiation complex in the cytoplasm. May also be involved in ribosome biogenesis. This chain is Eukaryotic translation initiation factor 6-1, found in Arabidopsis thaliana (Mouse-ear cress).